Here is a 540-residue protein sequence, read N- to C-terminus: Chaperonin GroEL 2 (540 aa).

ATP contacts are provided by residues 29-32 (TLGP), 86-90 (DGTTT), Gly-413, 476-478 (NAA), and Asp-492.

The protein belongs to the chaperonin (HSP60) family. As to quaternary structure, forms a cylinder of 14 subunits composed of two heptameric rings stacked back-to-back. Interacts with the co-chaperonin GroES.

It is found in the cytoplasm. The enzyme catalyses ATP + H2O + a folded polypeptide = ADP + phosphate + an unfolded polypeptide.. Functionally, together with its co-chaperonin GroES, plays an essential role in assisting protein folding. The GroEL-GroES system forms a nano-cage that allows encapsulation of the non-native substrate proteins and provides a physical environment optimized to promote and accelerate protein folding. The protein is Chaperonin GroEL 2 of Streptomyces albus G.